The sequence spans 331 residues: Nodulation protein D 2 (331 aa).

The HTH lysR-type domain maps to 6–63; the sequence is LDLNLLVALDALMTERSLTAAARKINLSQPAMSAAVARLRSYFRDELFAMRGRKLVPT. Residues 23–42 constitute a DNA-binding region (H-T-H motif); sequence LTAAARKINLSQPAMSAAVA.

It belongs to the LysR transcriptional regulatory family.

In terms of biological role, nodD regulates the expression of the nodABCFE genes which encode other nodulation proteins. NodD is also a negative regulator of its own expression. Binds flavonoids as inducers. The polypeptide is Nodulation protein D 2 (nodD2) (Bradyrhizobium elkanii).